Here is a 1125-residue protein sequence, read N- to C-terminus: Telomerase reverse transcriptase (1125 aa).

The interval 1-239 (MPRAPRCPAV…TKRLLSLTST (239 aa)) is RNA-interacting domain 1. The interval 58-205 (VPWGSQPPPA…RPVGGNFTNL (148 aa)) is GQ motif. The segment at 137 to 141 (WMLLL) is required for regulating specificity for telomeric DNA and for processivity for primer elongation. Residues 206 to 216 (GSAHQIKNSGH) are compositionally biased toward polar residues. The tract at residues 206–304 (GSAHQIKNSG…ASDPSLSGSV (99 aa)) is disordered. The interval 240–328 (NVPSAKKARF…PPQDAEKLRP (89 aa)) is linker. The span at 247-259 (ARFEPALRVDKGP) shows a compositional bias: basic and acidic residues. The span at 273–287 (APSPAASPKVPPAAK) shows a compositional bias: low complexity. The interval 306-528 (CKHKPSSSSL…VPAAEHRLRE (223 aa)) is required for oligomerization. Residues 329–540 (FTETRHFLYS…LAMFLFWLMD (212 aa)) form an RNA-interacting domain 2 region. Residues 332–337 (TRHFLY) carry the TFLY; involved in RNA binding motif. Residues 381 to 511 (FCRTRRLPRR…VKVEDCHWLR (131 aa)) are QFP motif. The segment at 402–422 (LMNHAKCQYVRFLRSHCRFRT) is CP motif. Phosphoserine; by DYRK2 is present on Ser-447. The region spanning 595–928 (EVKHHQDTWL…CLFPWCGLLL (334 aa)) is the Reverse transcriptase domain. Phosphotyrosine; by SRC-type Tyr-kinases is present on Tyr-697. Mg(2+) contacts are provided by Asp-702, Asp-861, and Asp-862. Residues 907–921 (LGGAAPHQLPAHCLF) are required for oligomerization. Residues 923 to 927 (WCGLL) form a primer grip sequence region. A CTE region spans residues 929–1125 (DTRTLEVFCD…LSTDFQTILD (197 aa)).

The protein belongs to the reverse transcriptase family. Telomerase subfamily. Catalytic component of the telomerase holoenzyme complex composed of one molecule of TERT, one molecule of WRAP53/TCAB1, two molecules of H/ACA ribonucleoprotein complex subunits DKC1, NOP10, NHP2 and GAR1, and a telomerase RNA template component (TERC). The telomerase holoenzyme complex is associated with TEP1, SMG6/EST1A and POT1. The molecular chaperone HSP90/P23 complex is required for correct assembly and stabilization of the active telomerase. Interacts directly with HSP90A and PTGES3. Interacts with HSPA1A; the interaction occurs in the absence of TERC and dissociates once the complex has formed. Interacts with RAN; the interaction promotes nuclear export of TERT. Interacts with XPO1. Interacts with PTPN11; the interaction retains TERT in the nucleus. Interacts with NCL (via RRM1 and C-terminal RRM4/Arg/Gly-rich domains); the interaction is important for nucleolar localization of TERT. Interacts with SMARCA4 (via the bromodomain); the interaction regulates Wnt-mediated signaling. Interacts with MCRS1 (isoform MCRS2); the interaction inhibits in vitro telomerase activity. Interacts with PIF1; the interaction has no effect on the elongation activity of TERT. Interacts with PML; the interaction recruits TERT to PML bodies and inhibits telomerase activity. Interacts with GNL3L. Interacts with isoform 1 and isoform 2 of NVL. Interacts with DHX36. Interacts with ATF7. Phosphorylation at Tyr-697 under oxidative stress leads to translocation of TERT to the cytoplasm and reduces its antiapoptotic activity. Dephosphorylated by SHP2/PTPN11 leading to nuclear retention. Phosphorylation at the G2/M phase at Ser-447 by DYRK2 promotes ubiquitination by the EDVP complex and degradation. Post-translationally, ubiquitinated by the EDVP complex, a E3 ligase complex following phosphorylation at Ser-447 by DYRK2. Ubiquitinated leads to proteasomal degradation. In terms of tissue distribution, isoform 1 and isoform 2 expressed in thymus, liver, spleen, lung, kidney and testis. High level of inactive isoform 3 in adult hippocampus, low level in heart, cortex and cerebellum.

Its subcellular location is the nucleus. The protein localises to the nucleolus. It localises to the nucleoplasm. It is found in the chromosome. The protein resides in the telomere. Its subcellular location is the cytoplasm. The protein localises to the PML body. It carries out the reaction DNA(n) + a 2'-deoxyribonucleoside 5'-triphosphate = DNA(n+1) + diphosphate. Its function is as follows. Telomerase is a ribonucleoprotein enzyme essential for the replication of chromosome termini in most eukaryotes. Active in progenitor and cancer cells. Inactive, or very low activity, in normal somatic cells. Catalytic component of the teleromerase holoenzyme complex whose main activity is the elongation of telomeres by acting as a reverse transcriptase that adds simple sequence repeats to chromosome ends by copying a template sequence within the RNA component of the enzyme. Catalyzes the RNA-dependent extension of 3'-chromosomal termini with the 6-nucleotide telomeric repeat unit, 5'-TTAGGG-3'. The catalytic cycle involves primer binding, primer extension and release of product once the template boundary has been reached or nascent product translocation followed by further extension. More active on substrates containing 2 or 3 telomeric repeats. Telomerase activity is regulated by a number of factors including telomerase complex-associated proteins, chaperones and polypeptide modifiers. Modulates Wnt signaling. Plays important roles in aging and antiapoptosis. This is Telomerase reverse transcriptase from Rattus norvegicus (Rat).